The following is a 725-amino-acid chain: Beta-adducin (725 aa).

The disordered stretch occupies residues 1–22 (MSEDTVPEAASPPPSQGQHYFD). Phosphoserine occurs at positions 11 and 25. A Phosphothreonine modification is found at Thr55. A phosphoserine mark is found at Ser60 and Ser344. An interaction with calmodulin region spans residues 425–444 (KQQKEKTRWLNTPNTYLRVN). A disordered region spans residues 525–725 (AEKSRSPSTE…KSKKKEKVES (201 aa)). Residues Ser530 and Ser532 each carry the phosphoserine modification. Thr533 bears the Phosphothreonine mark. Residue Ser535 is modified to Phosphoserine. At Thr561 the chain carries Phosphothreonine. Residues 566 to 589 (EEYKKEVERKKLEQEQEGEKDIAT) show a composition bias toward basic and acidic residues. Ser594, Ser598, Ser602, and Ser606 each carry phosphoserine. The segment covering 596–621 (VKSTPASPVQSPSKAGTKSPAVSPSK) has biased composition (polar residues). Thr612 carries the phosphothreonine modification. A phosphoserine mark is found at Ser614, Ser618, and Ser620. Over residues 622–631 (TSEDTKKTEV) the composition is skewed to basic and acidic residues. Thr674 carries the post-translational modification Phosphothreonine. A phosphoserine mark is found at Ser678, Ser685, Ser688, Ser692, Ser696, Ser698, Ser700, Ser702, and Ser712. A compositionally biased stretch (low complexity) spans 687 to 700 (TSGPLSPEGSPSKS). The segment covering 701–725 (PSKKKKKFRTPSFLKKSKKKEKVES) has biased composition (basic residues). An interaction with calmodulin region spans residues 703-720 (KKKKKFRTPSFLKKSKKK).

It belongs to the aldolase class II family. Adducin subfamily. As to quaternary structure, found in a complex with ADD2, DMTN and SLC2A1. Interacts with SLC2A1. Heterodimer of an alpha and a beta subunit.

It is found in the cytoplasm. The protein resides in the cytoskeleton. Its subcellular location is the cell membrane. Its function is as follows. Membrane-cytoskeleton-associated protein that promotes the assembly of the spectrin-actin network. Binds to the erythrocyte membrane receptor SLC2A1/GLUT1 and may therefore provide a link between the spectrin cytoskeleton to the plasma membrane. Binds to calmodulin. Calmodulin binds preferentially to the beta subunit. This Mus musculus (Mouse) protein is Beta-adducin (Add2).